A 29-amino-acid chain; its full sequence is Cytochrome b6-f complex subunit 8 (29 aa).

Residues 3-23 traverse the membrane as a helical segment; it reads ILTLGWVSLLVVFTWSIAMVV.

The protein belongs to the PetN family. As to quaternary structure, the 4 large subunits of the cytochrome b6-f complex are cytochrome b6, subunit IV (17 kDa polypeptide, PetD), cytochrome f and the Rieske protein, while the 4 small subunits are PetG, PetL, PetM and PetN. The complex functions as a dimer.

The protein localises to the cellular thylakoid membrane. Component of the cytochrome b6-f complex, which mediates electron transfer between photosystem II (PSII) and photosystem I (PSI), cyclic electron flow around PSI, and state transitions. The chain is Cytochrome b6-f complex subunit 8 from Nostoc punctiforme (strain ATCC 29133 / PCC 73102).